The following is a 593-amino-acid chain: ABC1 family protein lscO (593 aa).

Disordered regions lie at residues 1–29 and 441–467; these read MDVA…GGKK and PYKN…EERK. Basic and acidic residues-rich tracts occupy residues 8–22 and 457–467; these read MERH…DDGT and QRTKETPEERK.

It belongs to the protein kinase superfamily. ADCK protein kinase family.

In terms of biological role, ABC1 family protein; part of the gene cluster that mediates the biosynthesis of the lipopeptide antibiotics leucinostatins that show extensive biological activities, including antimalarial, antiviral, antibacterial, antifungal, and antitumor activities, as well as phytotoxic. The function of lcsO within the leucinostatins biosynthesis has not been identified yet. The polypeptide is ABC1 family protein lscO (Purpureocillium lilacinum (Paecilomyces lilacinus)).